Here is a 149-residue protein sequence, read N- to C-terminus: Transcriptional repressor NrdR (149 aa).

A zinc finger lies at 3 to 34 (CPFCSAVDTKVIDSRLVGEGSQVRRRRQCLVC). The ATP-cone domain occupies 49–139 (PRVIKSNEVR…VYRSFEDIRE (91 aa)).

The protein belongs to the NrdR family. Zn(2+) is required as a cofactor.

Functionally, negatively regulates transcription of bacterial ribonucleotide reductase nrd genes and operons by binding to NrdR-boxes. The protein is Transcriptional repressor NrdR of Pectobacterium atrosepticum (strain SCRI 1043 / ATCC BAA-672) (Erwinia carotovora subsp. atroseptica).